Reading from the N-terminus, the 373-residue chain is 8-amino-7-oxononanoate synthase (373 aa).

Arg-16 serves as a coordination point for substrate. Residue 93–94 (GF) participates in pyridoxal 5'-phosphate binding. His-118 contributes to the substrate binding site. Pyridoxal 5'-phosphate contacts are provided by residues Ser-165, 190-193 (DEAH), and 222-225 (TFSK). At Lys-225 the chain carries N6-(pyridoxal phosphate)lysine. Thr-334 contributes to the substrate binding site.

The protein belongs to the class-II pyridoxal-phosphate-dependent aminotransferase family. BioF subfamily. As to quaternary structure, homodimer. It depends on pyridoxal 5'-phosphate as a cofactor.

It carries out the reaction 6-carboxyhexanoyl-[ACP] + L-alanine + H(+) = (8S)-8-amino-7-oxononanoate + holo-[ACP] + CO2. Its pathway is cofactor biosynthesis; biotin biosynthesis. Functionally, catalyzes the decarboxylative condensation of pimeloyl-[acyl-carrier protein] and L-alanine to produce 8-amino-7-oxononanoate (AON), [acyl-carrier protein], and carbon dioxide. This chain is 8-amino-7-oxononanoate synthase, found in Helicobacter pylori (strain ATCC 700392 / 26695) (Campylobacter pylori).